Here is a 363-residue protein sequence, read N- to C-terminus: NAD(P)H-quinone oxidoreductase subunit 1, chloroplastic (363 aa).

Helical transmembrane passes span 30–50 (LVPI…IVWL), 98–118 (FSIG…VIPF), 127–147 (LSIG…GLLM), 165–185 (AAQS…ISLL), 203–223 (FWGW…ISSL), 248–268 (YSGI…LVSS), 300–320 (VFGT…FLFI), and 336–356 (LLNL…LLTT).

The protein belongs to the complex I subunit 1 family. NDH is composed of at least 16 different subunits, 5 of which are encoded in the nucleus.

The protein localises to the plastid. It localises to the chloroplast thylakoid membrane. It catalyses the reaction a plastoquinone + NADH + (n+1) H(+)(in) = a plastoquinol + NAD(+) + n H(+)(out). The enzyme catalyses a plastoquinone + NADPH + (n+1) H(+)(in) = a plastoquinol + NADP(+) + n H(+)(out). Its function is as follows. NDH shuttles electrons from NAD(P)H:plastoquinone, via FMN and iron-sulfur (Fe-S) centers, to quinones in the photosynthetic chain and possibly in a chloroplast respiratory chain. The immediate electron acceptor for the enzyme in this species is believed to be plastoquinone. Couples the redox reaction to proton translocation, and thus conserves the redox energy in a proton gradient. The protein is NAD(P)H-quinone oxidoreductase subunit 1, chloroplastic of Solanum lycopersicum (Tomato).